The primary structure comprises 218 residues: Guanylate kinase (218 aa).

The region spanning 5–188 (GNLFILSAPS…ALLDLTTIVN (184 aa)) is the Guanylate kinase-like domain. 12-19 (APSGAGKS) is a binding site for ATP.

Belongs to the guanylate kinase family.

The protein localises to the cytoplasm. It catalyses the reaction GMP + ATP = GDP + ADP. Essential for recycling GMP and indirectly, cGMP. The protein is Guanylate kinase of Colwellia psychrerythraea (strain 34H / ATCC BAA-681) (Vibrio psychroerythus).